The primary structure comprises 454 residues: MFRGKVRKIHFIGIGGSGMNGIAELLLNQGYTITGSDLKESPTIERLRNLGAKIFIGHSEENVKDADVVVYSSAVKPDNPEMIKAKQLGIPTIPRGEMLAELMRFKYGIAIAGSHGKTTTTSMVGTVLGKTGFDPTVVIGGKLEAYGSNAKLGRGEFLVTESDESDGSFLKLTPTIVSINNIDLEHIGFYKDLEDIKKAFVAFANKVPFYGAAAVNIDDENVKSILPYIERKVIKFGFSEDADIRAYDVRLENGRYKFKVNDFGEIHLSVPGIHNVYNALATIAICNELSVPFCVIKESLENFKNAKRRFEIKYSNDIIVIDDYAHHPTELKATLSAARDYFKDRRIIAVFQPHRYSRLNALFEEFAKAFDIPDITIVTEVYSAGESPIENVSGEKLAEKIREYGNNVYYVSNLEEAENLLKNIIQKGDVILTLGAGSITQLSDTLAKYLSEKE.

Gly-113 to Thr-119 serves as a coordination point for ATP.

It belongs to the MurCDEF family.

Its subcellular location is the cytoplasm. It carries out the reaction UDP-N-acetyl-alpha-D-muramate + L-alanine + ATP = UDP-N-acetyl-alpha-D-muramoyl-L-alanine + ADP + phosphate + H(+). It participates in cell wall biogenesis; peptidoglycan biosynthesis. Cell wall formation. This chain is UDP-N-acetylmuramate--L-alanine ligase, found in Sulfurihydrogenibium sp. (strain YO3AOP1).